Reading from the N-terminus, the 605-residue chain is Elongation factor 4 (605 aa).

Positions 9–192 constitute a tr-type G domain; it reads NRIRNFCIIA…AIVQRIPAPA (184 aa). GTP contacts are provided by residues 21–26 and 139–142; these read DHGKST and NKID.

The protein belongs to the TRAFAC class translation factor GTPase superfamily. Classic translation factor GTPase family. LepA subfamily.

The protein localises to the cell inner membrane. It catalyses the reaction GTP + H2O = GDP + phosphate + H(+). Functionally, required for accurate and efficient protein synthesis under certain stress conditions. May act as a fidelity factor of the translation reaction, by catalyzing a one-codon backward translocation of tRNAs on improperly translocated ribosomes. Back-translocation proceeds from a post-translocation (POST) complex to a pre-translocation (PRE) complex, thus giving elongation factor G a second chance to translocate the tRNAs correctly. Binds to ribosomes in a GTP-dependent manner. This Pelodictyon phaeoclathratiforme (strain DSM 5477 / BU-1) protein is Elongation factor 4.